A 261-amino-acid polypeptide reads, in one-letter code: Beta cell expansion factor A (261 aa).

The first 21 residues, 1–21, serve as a signal peptide directing secretion; sequence MNKRNWLLALSLSLAFSPCYA. The segment at 99-261 is SYLF domain; that stretch reads KTAKEARIAI…IDKDLTETSR (163 aa).

The protein resides in the secreted. It is found in the host. Stimulates the proliferation of insulin-producing beta cells during development in gnotobiotic zebrafish and mice. BefA is a microbiome-derived protein that traffics from the host intestinal lumen to the pancreas to act directly on pancreatic islets. In pancreas, interacts directly with host beta cells and elicits their proliferation via a mechanism of increasing membrane permeabilization. Can also permeabilize bacterial cell membranes, but does not show killing of target bacteria. The polypeptide is Beta cell expansion factor A (Aeromonas veronii).